A 419-amino-acid chain; its full sequence is MRKIVINGGLPLQGEITISGAKNSVVALIPAIILADDVVTLDCVPDISDVASLVEIMELMGATVKRYDDVLEIDPRGVQNIPMPYGKINSLRASYYFYGSLLGRFGEATVGLPGGCDLGPRPIDLHLKAFEAMGATASYEGDNMKLSAKDTGLHGASIYMDTVSVGATINTMIAAVKANGRTIIENAAREPEIIDVATLLNNMGAHIRGAGTNIIIIDGVERLHGTRHQVIPDRIEAGTYISLAAAVGKGIRINNVLYEHLEGFIAKLEEMGVRMTVSEDSIFVEEQSNLKAINIKTAPYPGFATDLQQPLTPLLLRANGRGTIVDTIYEKRVNHVFELAKMDADISTTNGHILYTGGRDLRGTSVKATDLRAGAALVIAGLMAEGKTEITNIEFILRGYSDIIEKLRNLGADIRLVED.

22 to 23 (KN) is a binding site for phosphoenolpyruvate. Position 92 (Arg-92) interacts with UDP-N-acetyl-alpha-D-glucosamine. Cys-116 (proton donor) is an active-site residue. Position 116 is a 2-(S-cysteinyl)pyruvic acid O-phosphothioketal (Cys-116). Residues 121 to 125 (RPIDL), Asp-306, and Ile-328 contribute to the UDP-N-acetyl-alpha-D-glucosamine site.

The protein belongs to the EPSP synthase family. MurA subfamily.

It is found in the cytoplasm. The catalysed reaction is phosphoenolpyruvate + UDP-N-acetyl-alpha-D-glucosamine = UDP-N-acetyl-3-O-(1-carboxyvinyl)-alpha-D-glucosamine + phosphate. Its pathway is cell wall biogenesis; peptidoglycan biosynthesis. Functionally, cell wall formation. Adds enolpyruvyl to UDP-N-acetylglucosamine. Target for the antibiotic fosfomycin. This Streptococcus pneumoniae (strain Hungary19A-6) protein is UDP-N-acetylglucosamine 1-carboxyvinyltransferase.